An 802-amino-acid polypeptide reads, in one-letter code: Pyrophosphate-energized membrane proton pump 3 (802 aa).

The next 6 helical transmembrane spans lie at 41-61 (LNVR…FYMG), 66-86 (PIIV…VYLT), 118-138 (YGTI…IYLF), 160-180 (VAAF…GMWV), 206-226 (AGGF…AILY), and 246-266 (LPLL…FAQL). Residue Lys273 coordinates substrate. Residues Asp276, Asp280, and Asp306 each coordinate Mg(2+). 5 consecutive transmembrane segments (helical) span residues 348 to 368 (FILF…IGIL), 386 to 406 (MVVL…TFGA), 421 to 441 (WLNF…FVWI), 468 to 491 (IIAG…VAII), and 511 to 531 (GGLF…AYVL). 2 residues coordinate Mg(2+): Asp541 and Asn568. The next 4 membrane-spanning stretches (helical) occupy residues 577–597 (FAIG…MDEV), 615–635 (VFIG…WACA), 686–706 (GALA…LGYY), and 716–736 (VVAA…LFLN). Residues Asp743 and Asp773 each contribute to the Mg(2+) site. A substrate-binding site is contributed by Lys776. A helical membrane pass occupies residues 782–802 (SIHVLIKMLATITLVMAPIFL).

Belongs to the H(+)-translocating pyrophosphatase (TC 3.A.10) family. K(+)-insensitive subfamily. In terms of assembly, monomer.

The protein resides in the golgi apparatus membrane. It catalyses the reaction diphosphate + H2O + H(+)(in) = 2 phosphate + 2 H(+)(out). The polypeptide is Pyrophosphate-energized membrane proton pump 3 (AVPL2) (Arabidopsis thaliana (Mouse-ear cress)).